The primary structure comprises 66 residues: Cold shock-like protein CspLB (66 aa).

The CSD domain maps to 4–63 (GTVKWFNSEKGFGFIEVEGGDDVFVHFSAIEGEGFKTLDEGQSVEFEIVEGQRGPQAEKV).

In terms of assembly, homodimer.

It is found in the cytoplasm. The polypeptide is Cold shock-like protein CspLB (cspLB) (Listeria monocytogenes serovar 1/2a (strain ATCC BAA-679 / EGD-e)).